Reading from the N-terminus, the 148-residue chain is MMKSRTRRLSLSTLFGALLGVSVAAAWLYYSHRNEAGHGDLHEILHEAVPLDANEREILELKEDAFAQRRREIETRLRAANGKLADAIAKNPAWSPEVEAATQEVERAAGDLQRATLVHVFEMRAGLKPEHRPAYDRVLIDALRRGSQ.

The N-terminal stretch at 1-26 (MMKSRTRRLSLSTLFGALLGVSVAAA) is a signal peptide. Over 28-148 (LYYSHRNEAG…LIDALRRGSQ (121 aa)) the chain is Periplasmic. A coiled-coil region spans residues 54–117 (NEREILELKE…AAGDLQRATL (64 aa)).

The protein to A.xylosoxydans NccX.

It localises to the periplasm. Functionally, cnrH alone is able to activate cnr expression, while both CnrY and CrnR (CnrX) are needed for nickel induction of CnrH. Has been suggested to bind nickel. The polypeptide is Nickel and cobalt resistance protein CnrR (cnrR) (Cupriavidus metallidurans (strain ATCC 43123 / DSM 2839 / NBRC 102507 / CH34) (Ralstonia metallidurans)).